The primary structure comprises 421 residues: ATP-dependent RNA helicase RhlB (421 aa).

A Q motif motif is present at residues 9–37 (QKFSDFALHPQVVEALEKKRFYNCTPIQA). One can recognise a Helicase ATP-binding domain in the interval 40–219 (LPLTLAGRDV…FEQMNNAEYV (180 aa)). 53 to 60 (AQTGTGKT) is an ATP binding site. The DEAD box motif lies at 165-168 (DEAD). The region spanning 245-390 (RLLQTLIEEE…VSKYNPEALM (146 aa)) is the Helicase C-terminal domain. The segment at 396 to 421 (PLRLTRSRPGNGPRRAGAPRNRRRSG) is disordered. Over residues 402-414 (SRPGNGPRRAGAP) the composition is skewed to low complexity.

It belongs to the DEAD box helicase family. RhlB subfamily. As to quaternary structure, component of the RNA degradosome, which is a multiprotein complex involved in RNA processing and mRNA degradation.

It is found in the cytoplasm. The catalysed reaction is ATP + H2O = ADP + phosphate + H(+). In terms of biological role, DEAD-box RNA helicase involved in RNA degradation. Has RNA-dependent ATPase activity and unwinds double-stranded RNA. The protein is ATP-dependent RNA helicase RhlB of Salmonella dublin (strain CT_02021853).